Here is a 921-residue protein sequence, read N- to C-terminus: Isoleucine--tRNA ligase (921 aa).

Residues 57–67 carry the 'HIGH' region motif; sequence PYANGNIHVGT. Residue Glu551 participates in L-isoleucyl-5'-AMP binding. The short motif at 592-596 is the 'KMSKS' region element; the sequence is KMSKS. Residue Lys595 coordinates ATP. Zn(2+) is bound by residues Cys885, Cys888, Cys905, and Cys908.

The protein belongs to the class-I aminoacyl-tRNA synthetase family. IleS type 1 subfamily. As to quaternary structure, monomer. The cofactor is Zn(2+).

The protein localises to the cytoplasm. The catalysed reaction is tRNA(Ile) + L-isoleucine + ATP = L-isoleucyl-tRNA(Ile) + AMP + diphosphate. Catalyzes the attachment of isoleucine to tRNA(Ile). As IleRS can inadvertently accommodate and process structurally similar amino acids such as valine, to avoid such errors it has two additional distinct tRNA(Ile)-dependent editing activities. One activity is designated as 'pretransfer' editing and involves the hydrolysis of activated Val-AMP. The other activity is designated 'posttransfer' editing and involves deacylation of mischarged Val-tRNA(Ile). In Kosmotoga olearia (strain ATCC BAA-1733 / DSM 21960 / TBF 19.5.1), this protein is Isoleucine--tRNA ligase.